Here is a 661-residue protein sequence, read N- to C-terminus: Putative core protein L410 (661 aa).

The segment covering 1-11 (MADNKGRRDTF) has biased composition (basic and acidic residues). Residues 1-26 (MADNKGRRDTFDVSGDTNTNATSNKR) are disordered. The span at 15–25 (GDTNTNATSNK) shows a compositional bias: polar residues. Residues 112–140 (KKENKWSDKEYDEFRKELTNLLTGNRALE) adopt a coiled-coil conformation.

It localises to the virion. The polypeptide is Putative core protein L410 (Acanthamoeba polyphaga (Amoeba)).